The chain runs to 957 residues: Translation initiation factor IF-2 (957 aa).

Disordered regions lie at residues 34 to 282 (KSHS…RVVK) and 311 to 367 (SQSL…TIAG). The segment covering 107–161 (PARPQPPQAPTRPTPPAPVAPKPVEPVAAKPPAPPAKPEPTPPRPVPTLVPPPTR) has biased composition (pro residues). The span at 163 to 188 (TKKEEKVAATPPPRKELKEPPKKEKG) shows a compositional bias: basic and acidic residues. Positions 209–242 (PPAPAKPPEMAPKPALPELQPPPKPVRAPNPPKP) are enriched in pro residues. Basic and acidic residues-rich tracts occupy residues 250-259 (LDDKSVSKVI) and 266-275 (KDFDEEESKR). Positions 444–617 (RRPPVVTIMG…LLVAEVEDLY (174 aa)) constitute a tr-type G domain. The interval 453 to 460 (GHVDHGKT) is G1. 453 to 460 (GHVDHGKT) contacts GTP. The interval 478-482 (GITQH) is G2. Positions 503–506 (DTPG) are G3. Residues 503 to 507 (DTPGH) and 557 to 560 (NKID) contribute to the GTP site. The G4 stretch occupies residues 557 to 560 (NKID). Residues 593 to 595 (SAL) are G5.

The protein belongs to the TRAFAC class translation factor GTPase superfamily. Classic translation factor GTPase family. IF-2 subfamily.

Its subcellular location is the cytoplasm. Its function is as follows. One of the essential components for the initiation of protein synthesis. Protects formylmethionyl-tRNA from spontaneous hydrolysis and promotes its binding to the 30S ribosomal subunits. Also involved in the hydrolysis of GTP during the formation of the 70S ribosomal complex. This is Translation initiation factor IF-2 from Thermosynechococcus vestitus (strain NIES-2133 / IAM M-273 / BP-1).